The following is a 226-amino-acid chain: Purine nucleoside phosphorylase Cj1217c (226 aa).

Zn(2+)-binding residues include histidine 58, cysteine 93, and histidine 109.

This sequence belongs to the purine nucleoside phosphorylase YfiH/LACC1 family. In terms of assembly, homodimer. Cu(2+) serves as cofactor. Zn(2+) is required as a cofactor.

The catalysed reaction is adenosine + phosphate = alpha-D-ribose 1-phosphate + adenine. It catalyses the reaction S-methyl-5'-thioadenosine + phosphate = 5-(methylsulfanyl)-alpha-D-ribose 1-phosphate + adenine. The enzyme catalyses inosine + phosphate = alpha-D-ribose 1-phosphate + hypoxanthine. It carries out the reaction adenosine + H2O + H(+) = inosine + NH4(+). Functionally, purine nucleoside enzyme that catalyzes the phosphorolysis of adenosine and inosine nucleosides, yielding D-ribose 1-phosphate and the respective free bases, adenine and hypoxanthine. Also catalyzes the phosphorolysis of S-methyl-5'-thioadenosine into adenine and S-methyl-5-thio-alpha-D-ribose 1-phosphate. Also has adenosine deaminase activity. This is Purine nucleoside phosphorylase Cj1217c from Campylobacter jejuni subsp. jejuni serotype O:2 (strain ATCC 700819 / NCTC 11168).